The primary structure comprises 770 residues: uncharacterized protein (770 aa).

A disordered region spans residues 736–770 (GSGQPGQSPANVGDDPNRMVQSSASQTQIGHVFNN). Polar residues predominate over residues 754–770 (MVQSSASQTQIGHVFNN).

This is an uncharacterized protein from Caenorhabditis elegans.